A 261-amino-acid chain; its full sequence is MARKPLIAGNWKMNLNHLEAIALVQKIAFSLPAKYFDKVDVTVIPPFTDIRSVQTLVEGDKLLLTYGAQDVSAHDSGAYTGEISGSMLAKLGCTFVVVGHSERRTLHCEDNDTVLAKTKAALKNGITPIVCIGEGLDVREAGEHVSYNVEQLRGSLAGLSGEDIAKVVIAYEPVWAIGTGRVASAANAQEVCAAIRATLGELASQDVASGVRVLYGGSVNAKNVGEIVGQTDVDGALVGGASLKADEFATLSAIAAGGPLP.

Position 10–12 (10–12 (NWK)) interacts with substrate. His-100 serves as the catalytic Electrophile. Glu-172 acts as the Proton acceptor in catalysis. Substrate contacts are provided by residues Gly-178, Ser-218, and 239-240 (GG).

Belongs to the triosephosphate isomerase family. Homodimer.

Its subcellular location is the cytoplasm. The catalysed reaction is D-glyceraldehyde 3-phosphate = dihydroxyacetone phosphate. It participates in carbohydrate biosynthesis; gluconeogenesis. Its pathway is carbohydrate degradation; glycolysis; D-glyceraldehyde 3-phosphate from glycerone phosphate: step 1/1. In terms of biological role, involved in the gluconeogenesis. Catalyzes stereospecifically the conversion of dihydroxyacetone phosphate (DHAP) to D-glyceraldehyde-3-phosphate (G3P). This chain is Triosephosphate isomerase, found in Rhodococcus jostii (strain RHA1).